Consider the following 315-residue polypeptide: NAD kinase (315 aa).

Aspartate 91 serves as the catalytic Proton acceptor. Residues 91–92 (DG), arginine 96, 165–166 (NE), aspartate 195, and 206–211 (TAYAFS) contribute to the NAD(+) site.

This sequence belongs to the NAD kinase family. A divalent metal cation serves as cofactor.

The protein localises to the cytoplasm. The catalysed reaction is NAD(+) + ATP = ADP + NADP(+) + H(+). Functionally, involved in the regulation of the intracellular balance of NAD and NADP, and is a key enzyme in the biosynthesis of NADP. Catalyzes specifically the phosphorylation on 2'-hydroxyl of the adenosine moiety of NAD to yield NADP. The polypeptide is NAD kinase (Rhodococcus erythropolis (strain PR4 / NBRC 100887)).